Consider the following 152-residue polypeptide: MLEVSILDKRWHSITKDPQSFVLNIINASLKELKIDHYKPNISIALADDNLLHQLNLKFREIDKPTNVLSFPCEQLSSECDLGDIAIAVDTIERESHEYCISILTHTAHMLVHGLLHLLGYDHQKEDEEIIMKSLESKILALLEFEKEKYGR.

Zn(2+) contacts are provided by His-113, His-117, and His-123.

It belongs to the endoribonuclease YbeY family. It depends on Zn(2+) as a cofactor.

Its subcellular location is the cytoplasm. In terms of biological role, single strand-specific metallo-endoribonuclease involved in late-stage 70S ribosome quality control and in maturation of the 3' terminus of the 16S rRNA. The sequence is that of Endoribonuclease YbeY from Wolbachia pipientis subsp. Culex pipiens (strain wPip).